The primary structure comprises 345 residues: Tryptophan--tRNA ligase (345 aa).

Residues 21–23 (QPT) and 30–31 (GN) each bind ATP. The 'HIGH' region motif lies at 22-31 (PTADSYHLGN). Asp-147 is an L-tryptophan binding site. Residues 159–161 (GED), Ile-198, and 207–211 (KMSKS) contribute to the ATP site. Residues 207–211 (KMSKS) carry the 'KMSKS' region motif.

It belongs to the class-I aminoacyl-tRNA synthetase family. Homodimer.

The protein localises to the cytoplasm. The enzyme catalyses tRNA(Trp) + L-tryptophan + ATP = L-tryptophyl-tRNA(Trp) + AMP + diphosphate + H(+). Catalyzes the attachment of tryptophan to tRNA(Trp). This chain is Tryptophan--tRNA ligase, found in Corynebacterium glutamicum (strain ATCC 13032 / DSM 20300 / JCM 1318 / BCRC 11384 / CCUG 27702 / LMG 3730 / NBRC 12168 / NCIMB 10025 / NRRL B-2784 / 534).